A 257-amino-acid chain; its full sequence is tRNA pseudouridine synthase A (257 aa).

Asp53 functions as the Nucleophile in the catalytic mechanism. Tyr111 is a binding site for substrate.

Belongs to the tRNA pseudouridine synthase TruA family. As to quaternary structure, homodimer.

The catalysed reaction is uridine(38/39/40) in tRNA = pseudouridine(38/39/40) in tRNA. Formation of pseudouridine at positions 38, 39 and 40 in the anticodon stem and loop of transfer RNAs. This chain is tRNA pseudouridine synthase A, found in Xanthomonas campestris pv. campestris (strain 8004).